Consider the following 793-residue polypeptide: Splicing factor 3A subunit 1 (793 aa).

Residues 1–43 (MPAGPVQAVPPPPPVPTEPKQPTEEEASSKEDSAPSKPVVGII) are disordered. Over residues 8 to 19 (AVPPPPPVPTEP) the composition is skewed to pro residues. A Glycyl lysine isopeptide (Lys-Gly) (interchain with G-Cter in SUMO2) cross-link involves residue lysine 20. Positions 21 to 34 (QPTEEEASSKEDSA) are enriched in basic and acidic residues. The SURP motif 1 repeat unit spans residues 52–94 (IVDKTASFVARNGPEFEARIRQNEINNPKFNFLNPNDPYHAYY). N6-acetyllysine is present on lysine 55. Lysine 131 participates in a covalent cross-link: Glycyl lysine isopeptide (Lys-Gly) (interchain with G-Cter in SUMO2). An SURP motif 2 repeat occupies 166-208 (VVKLTAQFVARNGRQFLTQLMQKEQRNYQFDFLRPQHSLFNYF). The segment at 318-428 (GESEEVEMEV…KIPASKMQEH (111 aa)) is disordered. 3 positions are modified to phosphoserine: serine 320, serine 329, and serine 359. Composition is skewed to acidic residues over residues 320–334 (SEEV…EEDD) and 354–364 (DMDEGSDDEEE). Residues 368–384 (VPPPPETPMPPPLPPTP) are compositionally biased toward pro residues. Residues 388–397 (IVRKDYDPKA) show a composition bias toward basic and acidic residues. Serine 413 is modified (phosphoserine). A Glycyl lysine isopeptide (Lys-Gly) (interchain with G-Cter in SUMO2) cross-link involves residue lysine 424. Serine 451 carries the phosphoserine modification. Phosphotyrosine is present on tyrosine 456. Residues 488 to 502 (IGEEEIQKPEEKVTW) are compositionally biased toward basic and acidic residues. 3 disordered regions span residues 488-518 (IGEE…AAQA), 530-584 (HKAK…TMPP), and 665-688 (APMP…LKTE). A Glycyl lysine isopeptide (Lys-Gly) (interchain with G-Cter in SUMO2) cross-link involves residue lysine 499. The residue at position 508 (serine 508) is a Phosphoserine. Positions 509-518 (MARTQQAAQA) are enriched in polar residues. Lysine 542 participates in a covalent cross-link: Glycyl lysine isopeptide (Lys-Gly) (interchain with G-Cter in SUMO2). Pro residues predominate over residues 665 to 675 (APMPPVHPPPP). The tract at residues 680-702 (PTSKKLKTEDSLMPEEEFLRRNK) is required and sufficient for nuclear import. A Glycyl lysine isopeptide (Lys-Gly) (interchain with G-Cter in SUMO2) cross-link involves residue lysine 686. The 87-residue stretch at 707 to 793 (IKVQVPNMQD…ALKERGGRKK (87 aa)) folds into the Ubiquitin-like domain. Tyrosine 759 carries the phosphotyrosine modification.

Component of the 17S U2 SnRNP complex, a ribonucleoprotein complex that contains small nuclear RNA (snRNA) U2 and a number of specific proteins. Part of the SF3A subcomplex of the 17S U2 SnRNP complex which is composed of three subunits; SF3A3/SAP61, SF3A2/SAP62 and SF3A1/SAP114. SF3A associates with the splicing factor SF3B and a 12S RNA unit to form the mature 17S U2 small nuclear ribonucleoprotein complex (17S U2 snRNP). SF3A1 functions as a scaffold that interacts directly with both SF3A2 and SF3A3. Identified in the spliceosome 'E' complex, a precursor of the spliceosome 'A' complex. Identified in the spliceosome 'A' and 'B' complexes. Identified in the spliceosome 'C' complex. Interacts with P2RX6; resulting in a reduction of the splicing activity. As to expression, ubiquitously expressed.

Its subcellular location is the nucleus. The protein localises to the nucleus speckle. In terms of biological role, component of the 17S U2 SnRNP complex of the spliceosome, a large ribonucleoprotein complex that removes introns from transcribed pre-mRNAs. The 17S U2 SnRNP complex (1) directly participates in early spliceosome assembly and (2) mediates recognition of the intron branch site during pre-mRNA splicing by promoting the selection of the pre-mRNA branch-site adenosine, the nucleophile for the first step of splicing. Within the 17S U2 SnRNP complex, SF3A1 is part of the SF3A subcomplex that contributes to the assembly of the 17S U2 snRNP, and the subsequent assembly of the pre-spliceosome 'E' complex and the pre-catalytic spliceosome 'A' complex. Involved in pre-mRNA splicing as a component of pre-catalytic spliceosome 'B' complexes. This is Splicing factor 3A subunit 1 (SF3A1) from Homo sapiens (Human).